The primary structure comprises 154 residues: Small ribosomal subunit protein uS13m (154 aa).

A mitochondrion-targeting transit peptide spans 1–30; the sequence is MLGLRRSATTLFDISQSLLRNVTFHGLRVQ. A disordered region spans residues 121–154; sequence RHGLPCRGQRTSTNARTKKGKAVAIAGKKKAPRK. Residues 136–154 show a composition bias toward basic residues; the sequence is RTKKGKAVAIAGKKKAPRK.

This sequence belongs to the universal ribosomal protein uS13 family. In terms of assembly, part of the small ribosomal subunit.

The protein resides in the mitochondrion. In terms of biological role, located at the top of the head of the small subunit, it contacts several helices of the 18S rRNA. The sequence is that of Small ribosomal subunit protein uS13m (RPS13) from Arabidopsis thaliana (Mouse-ear cress).